The chain runs to 335 residues: 3-ketodihydrosphingosine reductase TSC10 (335 aa).

Residues glycine 42, serine 44, serine 45, glycine 46, arginine 67, aspartate 68, lysine 71, aspartate 95, and leucine 96 each coordinate NADPH. Positions 42–46 (GGSSG) match the GXSXG motif. The interval 141 to 207 (LKDGLDGVYW…RGLSDALRSE (67 aa)) is involved in homodimer formation. Tyrosine 190 serves as the catalytic Proton acceptor. NADP(+) is bound by residues tyrosine 190, lysine 194, and isoleucine 223. Residue lysine 194 is the Lowers pKa of active site Tyr of the active site. A helical transmembrane segment spans residues 288 to 308 (TNNFLLDTLWLIVSSVGVPIW).

It belongs to the short-chain dehydrogenases/reductases (SDR) family. As to quaternary structure, homodimer; a minor portion forms homotetramers.

Its subcellular location is the endoplasmic reticulum membrane. The enzyme catalyses sphinganine + NADP(+) = 3-oxosphinganine + NADPH + H(+). The protein operates within lipid metabolism; sphingolipid metabolism. Catalyzes the reduction of 3'-oxosphinganine (3-ketodihydrosphingosine/KDS) to sphinganine (dihydrosphingosine/DHS), the second step of de novo sphingolipid biosynthesis. This chain is 3-ketodihydrosphingosine reductase TSC10 (TSC10), found in Cryptococcus neoformans var. neoformans serotype D (strain JEC21 / ATCC MYA-565) (Filobasidiella neoformans).